Here is a 408-residue protein sequence, read N- to C-terminus: MSLSVTRENFDEWMVPVYVPAPFIPVRGEGSRLWDQQGKEYIDFAGGIAVNALGHAHPALREALNEQANRFWHTGNGYTNEPALRLAKKLIDATFAERVFFCNSGAEANEAALKLARKYAHDRVGNHKSGIVAFKNAFHGRTLFTVSAGGQPTYSQDFAPLPPDIRHAAYNDLNSASALIDDNTCAVIVEPVQGEGGVIPATKAFLQGLRELCDRYQALLIFDEVQTGVGRTGELYAYMHYGVTPDILTTAKALGGGFPIGAMLTTQNYASVMTPGTHGTTYGGNPLATAVAGKVLDIINTPEMQNGVRQRHDAFIERLNTLNVRFGMFSEIRGLGLLLGCVLQTEFAGKAKLIAQEAAKAGVMVLIAGGDVVRFAPALNVSDEEIATGLDRFALACERLQTGGAPCG.

At lysine 252 the chain carries N6-(pyridoxal phosphate)lysine.

This sequence belongs to the class-III pyridoxal-phosphate-dependent aminotransferase family. AstC subfamily. The cofactor is pyridoxal 5'-phosphate.

It carries out the reaction N(2)-succinyl-L-ornithine + 2-oxoglutarate = N-succinyl-L-glutamate 5-semialdehyde + L-glutamate. It participates in amino-acid degradation; L-arginine degradation via AST pathway; L-glutamate and succinate from L-arginine: step 3/5. In terms of biological role, catalyzes the transamination of N(2)-succinylornithine and alpha-ketoglutarate into N(2)-succinylglutamate semialdehyde and glutamate. Can also act as an acetylornithine aminotransferase. The polypeptide is Succinylornithine transaminase (Salmonella newport (strain SL254)).